The following is an 871-amino-acid chain: Mitochondrial 15S rRNA processing factor CCM1 (871 aa).

The transit peptide at 1–72 (MLGRRLAGAK…EFKLRQLREF (72 aa)) directs the protein to the mitochondrion. 2 PPR repeats span residues 333 to 369 (NKENYTVIAQFYTKLGLHDKAWDIFATMKFLSADHKP) and 370 to 404 (DAKTYTCMLSLCNKEKNYAKAIDLFNEMIDLKVDP). The disordered stretch occupies residues 704–724 (RPGSSTHLTHSEIKKQPSSQT).

It belongs to the CCM1 family. Binds to mitochondrial small subunit 15S rRNA.

It is found in the mitochondrion. In terms of biological role, regulates mitochondrial small subunit maturation by controlling 15S rRNA 5'-end processing. Localizes to the 5' precursor of the 15S rRNA in a position that is subsequently occupied by mS47 in the mature yeast mtSSU. Uses structure and sequence-specific RNA recognition, binding to a single-stranded region of the precursor and specifically recognizing bases -6 to -1. The exchange of Ccm1 for mS47 is coupled to the irreversible removal of precursor rRNA that is accompanied by conformational changes of the mitoribosomal proteins uS5m and mS26. These conformational changes signal completion of 5'-end rRNA processing through protection of the mature 5'-end of the 15S rRNA and stabilization of mS47. The removal of the 5' precursor together with the dissociation of Ccm1 may be catalyzed by the 5'-3' exoribonuclease Pet127. Involved in the specific removal of group I introns in mitochondrial encoded transcripts. The polypeptide is Mitochondrial 15S rRNA processing factor CCM1 (CCM1) (Lachancea thermotolerans (strain ATCC 56472 / CBS 6340 / NRRL Y-8284) (Yeast)).